The following is a 382-amino-acid chain: Heme A synthase (382 aa).

8 helical membrane passes run 25 to 45, 112 to 132, 141 to 161, 176 to 196, 211 to 231, 270 to 290, 303 to 323, and 327 to 347; these read GAVRAWLYLLAVLVVAMVAVG, LLGRIVGLVFFLPFAWFWARG, GLLGLGLLGGLQGAIGWIMVA, LALHLTTASLILAGLVWLAAG, VVACLLPALVLVQIWLGGLVA, LALVQFNHRLFAYLVVAVAIA, AAAGRAMGVAALATAQMGLGI, and LLHVPLWAGLAHQVFAMAVLI. H277 is a binding site for heme. H338 lines the heme pocket.

Belongs to the COX15/CtaA family. Type 2 subfamily. As to quaternary structure, interacts with CtaB. It depends on heme b as a cofactor.

The protein resides in the cell membrane. It carries out the reaction Fe(II)-heme o + 2 A + H2O = Fe(II)-heme a + 2 AH2. The protein operates within porphyrin-containing compound metabolism; heme A biosynthesis; heme A from heme O: step 1/1. Its function is as follows. Catalyzes the conversion of heme O to heme A by two successive hydroxylations of the methyl group at C8. The first hydroxylation forms heme I, the second hydroxylation results in an unstable dihydroxymethyl group, which spontaneously dehydrates, resulting in the formyl group of heme A. This chain is Heme A synthase, found in Methylorubrum extorquens (strain CM4 / NCIMB 13688) (Methylobacterium extorquens).